Here is a 1148-residue protein sequence, read N- to C-terminus: Pyruvate carboxylase (1148 aa).

The region spanning 1–457 (MSQQSIQKVL…DTSFIDTTPE (457 aa)) is the Biotin carboxylation domain. Residues Lys121, Glu205, and His240 each coordinate ATP. An ATP-grasp domain is found at 125–321 (REQAEKAGIP…IVQTQILVAQ (197 aa)). Lys242 is an active-site residue. The Pyruvate carboxyltransferase domain occupies 534-802 (VLLTDTTFRD…RPEMNVQGVE (269 aa)). Residues 542 to 546 (RDAHQ) and Arg615 contribute to the substrate site. Asp543 contributes to the a divalent metal cation binding site. A divalent metal cation is bound by residues Lys712, His741, and His743. Lys712 bears the N6-carboxylysine mark. Thr876 contributes to the substrate binding site. The Biotinyl-binding domain maps to 1071–1146 (KADRTNPSHI…QTGDLLLEIE (76 aa)). An N6-biotinyllysine modification is found at Lys1112.

Homotetramer. At very low potassium concentrations, when intracellular levels of c-di-AMP are low, interacts with apo-DarB. c-di-AMP inhibits the binding of DarB to PYC. Does not bind directly c-di-AMP. Requires biotin as cofactor.

The catalysed reaction is hydrogencarbonate + pyruvate + ATP = oxaloacetate + ADP + phosphate + H(+). Its activity is regulated as follows. Activated by the cyclic di-AMP (c-di-AMP) receptor DarB in the absence of c-di-AMP. Allosterically activated by acetyl-CoA. Inhibited by the biotin-complexing protein avidin. In terms of biological role, catalyzes a 2-step reaction, involving the ATP-dependent carboxylation of the covalently attached biotin in the first step and the transfer of the carboxyl group to pyruvate in the second, leading to oxaloacetate production. Fulfills an anaplerotic function in B.subtilis as it is necessary for growth on glucose, but is not required for sporulation. The sequence is that of Pyruvate carboxylase (pyc) from Bacillus subtilis (strain 168).